Consider the following 110-residue polypeptide: Large ribosomal subunit protein uL22 (110 aa).

This sequence belongs to the universal ribosomal protein uL22 family. As to quaternary structure, part of the 50S ribosomal subunit.

Its function is as follows. This protein binds specifically to 23S rRNA; its binding is stimulated by other ribosomal proteins, e.g. L4, L17, and L20. It is important during the early stages of 50S assembly. It makes multiple contacts with different domains of the 23S rRNA in the assembled 50S subunit and ribosome. In terms of biological role, the globular domain of the protein is located near the polypeptide exit tunnel on the outside of the subunit, while an extended beta-hairpin is found that lines the wall of the exit tunnel in the center of the 70S ribosome. This Verminephrobacter eiseniae (strain EF01-2) protein is Large ribosomal subunit protein uL22.